The following is a 504-amino-acid chain: DnaJ homolog subfamily C member 3 (504 aa).

The first 31 residues, 1-31, serve as a signal peptide directing secretion; that stretch reads MVAPGSVGSRLGAVFPFLLVLVDLQYEGAEC. 9 TPR repeats span residues 37–70, 72–104, 105–138, 154–187, 188–221, 222–255, 268–301, 306–339, and 340–373; these read VEKH…DPDN, IAYY…KMDF, TAAR…NPSE, MQRL…CVWD, AELR…KSDN, TEAF…DQDH, LNKL…EPSV, VRSK…EPDN, and VNAL…NEND. A disulfide bridge connects residues Cys-248 and Cys-258. Ser-274 carries the post-translational modification Phosphoserine. Cys-313 and Cys-329 are disulfide-bonded. Residues 375–393 are flexible linker; the sequence is QIREGLEKAQRLLKQSQKR. One can recognise a J domain in the interval 394–462; sequence DYYKILGVKR…EMRKKFDDGE (69 aa). Residues 451–481 are disordered; it reads DPEMRKKFDDGEDPLDAESQQGGGGNPFHRS.

Interacts with EIF2AK4/GCN2; this interaction occurs under endoplasmic reticulum (ER) stress, hypothermic and amino acid starving stress conditions and inhibits EIF2AK4/GCN2 kinase activity. Interacts with EIF2AK3. Interacts with EIF2AK2. Forms a trimeric complex with DNAJB1 and HSPA8. Interacts with THAP12. As to expression, widely expressed, with high level in the liver.

The protein resides in the endoplasmic reticulum. In terms of biological role, involved in the unfolded protein response (UPR) during endoplasmic reticulum (ER) stress. Acts as a negative regulator of the EIF2AK4/GCN2 kinase activity by preventing the phosphorylation of eIF-2-alpha at 'Ser-52' and hence attenuating general protein synthesis under ER stress, hypothermic and amino acid starving stress conditions. Co-chaperone of HSPA8/HSC70, it stimulates its ATPase activity. May inhibit both the autophosphorylation of EIF2AK2/PKR and the ability of EIF2AK2 to catalyze phosphorylation of the EIF2A. May inhibit EIF2AK3/PERK activity. The sequence is that of DnaJ homolog subfamily C member 3 (Dnajc3) from Mus musculus (Mouse).